Here is a 145-residue protein sequence, read N- to C-terminus: D-aminoacyl-tRNA deacylase (145 aa).

A Gly-cisPro motif, important for rejection of L-amino acids motif is present at residues 137–138; that stretch reads GP.

It belongs to the DTD family. In terms of assembly, homodimer.

It localises to the cytoplasm. It carries out the reaction glycyl-tRNA(Ala) + H2O = tRNA(Ala) + glycine + H(+). It catalyses the reaction a D-aminoacyl-tRNA + H2O = a tRNA + a D-alpha-amino acid + H(+). Its function is as follows. An aminoacyl-tRNA editing enzyme that deacylates mischarged D-aminoacyl-tRNAs. Also deacylates mischarged glycyl-tRNA(Ala), protecting cells against glycine mischarging by AlaRS. Acts via tRNA-based rather than protein-based catalysis; rejects L-amino acids rather than detecting D-amino acids in the active site. By recycling D-aminoacyl-tRNA to D-amino acids and free tRNA molecules, this enzyme counteracts the toxicity associated with the formation of D-aminoacyl-tRNA entities in vivo and helps enforce protein L-homochirality. In Lactobacillus helveticus (strain DPC 4571), this protein is D-aminoacyl-tRNA deacylase.